We begin with the raw amino-acid sequence, 96 residues long: (4S)-4-hydroxy-5-phosphonooxypentane-2,3-dione isomerase (96 aa).

In terms of domain architecture, ABM spans 2–91 (HVTLVEINVK…MTGPRKKTVF (90 aa)).

The protein belongs to the LsrG family. Homodimer.

Its subcellular location is the cytoplasm. It catalyses the reaction (2S)-2-hydroxy-3,4-dioxopentyl phosphate = 3-hydroxy-2,4-dioxopentyl phosphate. Its function is as follows. Involved in the degradation of phospho-AI-2, thereby terminating induction of the lsr operon and closing the AI-2 signaling cycle. Catalyzes the conversion of (4S)-4-hydroxy-5-phosphonooxypentane-2,3-dione (P-DPD) to 3-hydroxy-5-phosphonooxypentane-2,4-dione (P-HPD). The protein is (4S)-4-hydroxy-5-phosphonooxypentane-2,3-dione isomerase of Yersinia pseudotuberculosis serotype O:1b (strain IP 31758).